Consider the following 498-residue polypeptide: Galactose-1-phosphate uridylyltransferase (498 aa).

It belongs to the galactose-1-phosphate uridylyltransferase type 2 family.

The protein localises to the cytoplasm. It carries out the reaction alpha-D-galactose 1-phosphate + UDP-alpha-D-glucose = alpha-D-glucose 1-phosphate + UDP-alpha-D-galactose. It functions in the pathway carbohydrate metabolism; galactose metabolism. The sequence is that of Galactose-1-phosphate uridylyltransferase from Staphylococcus carnosus (strain TM300).